A 356-amino-acid polypeptide reads, in one-letter code: DNA-directed RNA polymerase subunit alpha (356 aa).

Positions 1–259 (MIKAAATLKS…KLMTACLTTL (259 aa)) are alpha N-terminal domain (alpha-NTD). The alpha C-terminal domain (alpha-CTD) stretch occupies residues 277 to 356 (FVQVNYNKME…STYGIELKED (80 aa)).

Belongs to the RNA polymerase alpha chain family. In plastids the minimal PEP RNA polymerase catalytic core is composed of four subunits: alpha, beta, beta', and beta''. When a (nuclear-encoded) sigma factor is associated with the core the holoenzyme is formed, which can initiate transcription.

The protein localises to the plastid. The protein resides in the chloroplast. The enzyme catalyses RNA(n) + a ribonucleoside 5'-triphosphate = RNA(n+1) + diphosphate. Functionally, DNA-dependent RNA polymerase catalyzes the transcription of DNA into RNA using the four ribonucleoside triphosphates as substrates. This is DNA-directed RNA polymerase subunit alpha from Ostreococcus tauri.